The primary structure comprises 429 residues: 3-phosphoshikimate 1-carboxyvinyltransferase (429 aa).

3-phosphoshikimate contacts are provided by K11, S12, and R16. Phosphoenolpyruvate is bound at residue K11. 2 residues coordinate phosphoenolpyruvate: G82 and R110. 4 residues coordinate 3-phosphoshikimate: S155, Q157, D302, and K329. A phosphoenolpyruvate-binding site is contributed by Q157. The Proton acceptor role is filled by D302. Residues R333 and R385 each coordinate phosphoenolpyruvate.

The protein belongs to the EPSP synthase family. In terms of assembly, monomer.

The protein localises to the cytoplasm. It carries out the reaction 3-phosphoshikimate + phosphoenolpyruvate = 5-O-(1-carboxyvinyl)-3-phosphoshikimate + phosphate. It participates in metabolic intermediate biosynthesis; chorismate biosynthesis; chorismate from D-erythrose 4-phosphate and phosphoenolpyruvate: step 6/7. Catalyzes the transfer of the enolpyruvyl moiety of phosphoenolpyruvate (PEP) to the 5-hydroxyl of shikimate-3-phosphate (S3P) to produce enolpyruvyl shikimate-3-phosphate and inorganic phosphate. The chain is 3-phosphoshikimate 1-carboxyvinyltransferase from Helicobacter pylori (strain P12).